A 587-amino-acid chain; its full sequence is Arginine--tRNA ligase (587 aa).

Positions 127 to 137 match the 'HIGH' region motif; the sequence is PNLAKEMHVGH.

This sequence belongs to the class-I aminoacyl-tRNA synthetase family. Monomer.

The protein resides in the cytoplasm. It catalyses the reaction tRNA(Arg) + L-arginine + ATP = L-arginyl-tRNA(Arg) + AMP + diphosphate. This chain is Arginine--tRNA ligase, found in Pseudomonas aeruginosa (strain ATCC 15692 / DSM 22644 / CIP 104116 / JCM 14847 / LMG 12228 / 1C / PRS 101 / PAO1).